Consider the following 293-residue polypeptide: SAGA-associated factor 29 (293 aa).

The stretch at 3-86 (LVSADSRIAE…LRKALDKIAE (84 aa)) forms a coiled coil. The region spanning 152-293 (GDYVAKPGDK…VVACKEPKKK (142 aa)) is the SGF29 C-terminal domain. 2 histone H3K4me3 N-terminus binding regions span residues 194 to 196 (DID) and 240 to 243 (QTTC). The tract at residues 264–266 (FED) is histone H3K4me3 binding. Lysine 288 bears the N6-acetyllysine mark.

Belongs to the SGF29 family. In terms of assembly, interacts with dimethylated and trimethylated 'Lys-4' of histone H3 (H3K4me2 and H3K4me3), with a preference for the trimethylated form (H3K4me3). Component of some SAGA-type complexes. Component of the ADA2A-containing complex (ATAC), composed of KAT14, KAT2A, TADA2L, TADA3L, ZZ3, MBIP, WDR5, YEATS2, CCDC101 and DR1. Interacts with (methylated) CGAS. Interacts with TADA3L, GCN5L2, SUPT3H and MYC.

The protein resides in the nucleus. Chromatin reader component of some histone acetyltransferase (HAT) SAGA-type complexes like the TFTC-HAT, ATAC or STAGA complexes. SGF29 specifically recognizes and binds methylated 'Lys-4' of histone H3 (H3K4me), with a preference for trimethylated form (H3K4me3). In the SAGA-type complexes, SGF29 is required to recruit complexes to H3K4me. Involved in the response to endoplasmic reticulum (ER) stress by recruiting the SAGA complex to H3K4me, thereby promoting histone H3 acetylation and cell survival. Also binds non-histone proteins that are methylated on Lys residues: specifically recognizes and binds CGAS monomethylated on 'Lys-491'. The polypeptide is SAGA-associated factor 29 (Mus musculus (Mouse)).